We begin with the raw amino-acid sequence, 449 residues long: Exodeoxyribonuclease 7 large subunit (449 aa).

This sequence belongs to the XseA family. In terms of assembly, heterooligomer composed of large and small subunits.

It localises to the cytoplasm. It catalyses the reaction Exonucleolytic cleavage in either 5'- to 3'- or 3'- to 5'-direction to yield nucleoside 5'-phosphates.. Bidirectionally degrades single-stranded DNA into large acid-insoluble oligonucleotides, which are then degraded further into small acid-soluble oligonucleotides. This Salmonella heidelberg (strain SL476) protein is Exodeoxyribonuclease 7 large subunit.